The following is a 299-amino-acid chain: MSGFVEKPEPIQVPGLVHLHTGKVRELYRNEAGDLVMVASDRISAYDWVLPTEIPDKGRVLTQLSLWWFDQLADLAPNHVLSTELPPGAPADWEGRALVCKSLRMVPVECVARGYLTGSGLAEYDETRTVCGLALPEGLVDGSELPAPIFTPATKAEVGEHDENVSYEEVARQVGADTAAALRQATLAVYSRARDIARERGIVLADTKFEFGFDGDDLVLADEVLTPDSSRFWPADRWQPGRAQPSYDKQFVRDWLTSAESGWDRKSEQPPPPLPQQVVDATRAKYVEAYELLTGQSWS.

The protein belongs to the SAICAR synthetase family.

It catalyses the reaction 5-amino-1-(5-phospho-D-ribosyl)imidazole-4-carboxylate + L-aspartate + ATP = (2S)-2-[5-amino-1-(5-phospho-beta-D-ribosyl)imidazole-4-carboxamido]succinate + ADP + phosphate + 2 H(+). It participates in purine metabolism; IMP biosynthesis via de novo pathway; 5-amino-1-(5-phospho-D-ribosyl)imidazole-4-carboxamide from 5-amino-1-(5-phospho-D-ribosyl)imidazole-4-carboxylate: step 1/2. The chain is Phosphoribosylaminoimidazole-succinocarboxamide synthase from Streptomyces coelicolor (strain ATCC BAA-471 / A3(2) / M145).